We begin with the raw amino-acid sequence, 246 residues long: Uridylate kinase (246 aa).

18 to 21 is a binding site for ATP; that stretch reads KVSG. Gly-60 serves as a coordination point for UMP. Positions 61 and 65 each coordinate ATP. UMP is bound by residues Asp-80 and 141-148; that span reads TGNPFFTT. ATP is bound by residues Thr-168, Gln-169, Tyr-174, and Asp-177.

Belongs to the UMP kinase family. Homohexamer.

The protein localises to the cytoplasm. It carries out the reaction UMP + ATP = UDP + ADP. Its pathway is pyrimidine metabolism; CTP biosynthesis via de novo pathway; UDP from UMP (UMPK route): step 1/1. With respect to regulation, inhibited by UTP. In terms of biological role, catalyzes the reversible phosphorylation of UMP to UDP. This Granulibacter bethesdensis (strain ATCC BAA-1260 / CGDNIH1) protein is Uridylate kinase.